The primary structure comprises 237 residues: Splicing factor U2AF 35 kDa subunit (237 aa).

Position 2 is an N-acetylalanine (Ala-2). The C3H1-type 1 zinc finger occupies 12 to 40 (EKDKVNCSFYFKIGACRHGDRCSRLHNKP). At Lys-39 the chain carries N6-methyllysine. 2 positions are modified to phosphoserine: Ser-61 and Ser-145. The RRM domain occupies 65-147 (LRCAVSDVEM…QPIHAELSPV (83 aa)). A C3H1-type 2 zinc finger spans residues 149–176 (DFREACCRQYEMGECTRGGFCNFMHLKP). The residue at position 165 (Arg-165) is an Omega-N-methylarginine. Residues 185-237 (LYGRRRKKHRSRSRSRERRSRSRDRGRGGGGGGGGGRERDRRRSRDRERSGRF) are disordered. The segment covering 188-208 (RRRKKHRSRSRSRERRSRSRD) has biased composition (basic residues). Basic and acidic residues predominate over residues 220 to 237 (GRERDRRRSRDRERSGRF).

Belongs to the splicing factor SR family. In terms of assembly, identified in the spliceosome C complex. Heterodimer with U2AF2. Interacts (via RS domain) with PHF5A (via N-terminus). Interacts with ZRANB2. Interacts with SDE2. Interacts with SF3B1.

The protein resides in the nucleus. The protein localises to the nucleus speckle. Plays a critical role in both constitutive and enhancer-dependent splicing by mediating protein-protein interactions and protein-RNA interactions required for accurate 3'-splice site selection. Recruits U2 snRNP to the branch point. Directly mediates interactions between U2AF2 and proteins bound to the enhancers and thus may function as a bridge between U2AF2 and the enhancer complex to recruit it to the adjacent intron. In Bos taurus (Bovine), this protein is Splicing factor U2AF 35 kDa subunit (U2AF1).